A 426-amino-acid polypeptide reads, in one-letter code: Histidine--tRNA ligase (426 aa).

Belongs to the class-II aminoacyl-tRNA synthetase family. As to quaternary structure, homodimer.

Its subcellular location is the cytoplasm. The catalysed reaction is tRNA(His) + L-histidine + ATP = L-histidyl-tRNA(His) + AMP + diphosphate + H(+). This Chlorobium phaeovibrioides (strain DSM 265 / 1930) (Prosthecochloris vibrioformis (strain DSM 265)) protein is Histidine--tRNA ligase.